Here is a 432-residue protein sequence, read N- to C-terminus: Adenylosuccinate synthetase (432 aa).

GTP contacts are provided by residues 12–18 (GDEGKGK) and 40–42 (GHT). Asp13 functions as the Proton acceptor in the catalytic mechanism. Positions 13 and 40 each coordinate Mg(2+). Residues 13–16 (DEGK), 38–41 (NAGH), Thr132, Arg146, Gln226, Thr241, and Arg305 contribute to the IMP site. The Proton donor role is filled by His41. Position 301 to 307 (301 to 307 (VVTGRKR)) interacts with substrate. Residues Arg307, 333-335 (KLD), and 415-417 (STS) contribute to the GTP site.

It belongs to the adenylosuccinate synthetase family. As to quaternary structure, homodimer. The cofactor is Mg(2+).

Its subcellular location is the cytoplasm. It catalyses the reaction IMP + L-aspartate + GTP = N(6)-(1,2-dicarboxyethyl)-AMP + GDP + phosphate + 2 H(+). Its pathway is purine metabolism; AMP biosynthesis via de novo pathway; AMP from IMP: step 1/2. Plays an important role in the de novo pathway of purine nucleotide biosynthesis. Catalyzes the first committed step in the biosynthesis of AMP from IMP. The sequence is that of Adenylosuccinate synthetase from Rhizobium leguminosarum bv. trifolii (strain WSM2304).